Reading from the N-terminus, the 190-residue chain is NADH-quinone oxidoreductase subunit B (190 aa).

[4Fe-4S] cluster is bound by residues C69, C70, C134, and C164.

Belongs to the complex I 20 kDa subunit family. NDH-1 is composed of 14 different subunits. Subunits NuoB, C, D, E, F, and G constitute the peripheral sector of the complex. The cofactor is [4Fe-4S] cluster.

It localises to the cell inner membrane. It carries out the reaction a quinone + NADH + 5 H(+)(in) = a quinol + NAD(+) + 4 H(+)(out). Its function is as follows. NDH-1 shuttles electrons from NADH, via FMN and iron-sulfur (Fe-S) centers, to quinones in the respiratory chain. Couples the redox reaction to proton translocation (for every two electrons transferred, four hydrogen ions are translocated across the cytoplasmic membrane), and thus conserves the redox energy in a proton gradient. This Chelativorans sp. (strain BNC1) protein is NADH-quinone oxidoreductase subunit B.